Here is a 206-residue protein sequence, read N- to C-terminus: Large ribosomal subunit protein uL4 (206 aa).

Residues 47–79 (GTKGQKNRSAVRGGGAKPWAQKGSGRARAGTSR) form a disordered region. Residues 69–79 (GSGRARAGTSR) show a composition bias toward low complexity.

This sequence belongs to the universal ribosomal protein uL4 family. Part of the 50S ribosomal subunit.

Its function is as follows. One of the primary rRNA binding proteins, this protein initially binds near the 5'-end of the 23S rRNA. It is important during the early stages of 50S assembly. It makes multiple contacts with different domains of the 23S rRNA in the assembled 50S subunit and ribosome. In terms of biological role, forms part of the polypeptide exit tunnel. The protein is Large ribosomal subunit protein uL4 of Hydrogenovibrio crunogenus (strain DSM 25203 / XCL-2) (Thiomicrospira crunogena).